The primary structure comprises 106 residues: CRISPR-associated endoribonuclease Cas2 (106 aa).

A Mg(2+)-binding site is contributed by D8. The tract at residues 86–106 (EEAAEAAVSYPGRSRKKARAG) is disordered.

Belongs to the CRISPR-associated endoribonuclease Cas2 protein family. Homodimer, forms a heterotetramer with a Cas1 homodimer. The cofactor is Mg(2+).

In terms of biological role, CRISPR (clustered regularly interspaced short palindromic repeat), is an adaptive immune system that provides protection against mobile genetic elements (viruses, transposable elements and conjugative plasmids). CRISPR clusters contain sequences complementary to antecedent mobile elements and target invading nucleic acids. CRISPR clusters are transcribed and processed into CRISPR RNA (crRNA). Functions as a ssRNA-specific endoribonuclease. Involved in the integration of spacer DNA into the CRISPR cassette. This Desulforudis audaxviator (strain MP104C) protein is CRISPR-associated endoribonuclease Cas2.